The chain runs to 30 residues: Kalata-B10 (30 aa).

A cross-link (cyclopeptide (Gly-Asp)) is located at residues 1–30 (GLPTCGETCFGGTCNTPGCSCSSWPICTRD). Disulfide bonds link Cys5-Cys19, Cys9-Cys21, and Cys14-Cys27.

This sequence belongs to the cyclotide family. Moebius subfamily. In terms of processing, this peptide occurs in both cyclic and linear forms. The linear form contains unmodified Trp-24, the cyclic peptide occurs in two forms with unmodified Trp-24, and with Trp-24 oxidized to form oxindolylalanine. Oxidation is enhanced by exposure to sunlight.

Its function is as follows. Probably participates in a plant defense mechanism. In Oldenlandia affinis, this protein is Kalata-B10.